The following is a 329-amino-acid chain: Serpentine receptor class alpha-7 (329 aa).

7 helical membrane passes run 25-45 (YVYL…VKIV), 57-77 (ILLF…LFSA), 104-124 (YLKV…GLLL), 143-163 (VGIA…KIII), 187-207 (RLFA…SVLL), 237-257 (TICF…FGIF), and 273-293 (FIVV…ILLV).

Belongs to the nematode receptor-like protein sra family.

It localises to the membrane. This is Serpentine receptor class alpha-7 (sra-7) from Caenorhabditis elegans.